Consider the following 210-residue polypeptide: uncharacterized protein (210 aa).

The protein to E.coli YkgK.

This is an uncharacterized protein from Escherichia coli (strain K12).